Reading from the N-terminus, the 247-residue chain is LHFPL tetraspan subfamily member 4 protein (247 aa).

Helical transmembrane passes span 22–42, 97–117, 127–147, and 178–198; these read IGVL…VVFI, FFVL…ALFF, ICAW…MIFP, and ILAI…FVLG.

It belongs to the LHFP family. Interacts with GABA(A) receptor subunits. Interacts with GABRB3. Interacts with GABRA2. Interacts with GABRG2. Interacts with GABRA1. Identified in a complex of 720 kDa composed of LHFPL4, NLGN2, GABRA1, GABRB2, GABRG2 and GABRB3. Interacts with NLGN2; leading to mutual regulation of protein level and synaptic clustering. Highly expressed in the brain, including the cortex, hippocampus, midbrain, olfactory bulb pona plus medulla (at protein level). Expressed in the in the cerebellar granular layer and in granular layer. Colocalized with GPHN at inhibitory synapses. Weakly expressed in heart, testis, lung, intestine, vagina, ovary and uterus.

Its subcellular location is the cell projection. The protein resides in the dendrite. It localises to the postsynaptic cell membrane. Functionally, plays a role in the regulation of inhibitory synapse formation and function by being involved in maintening gamma-aminobutyric acid receptors (GABAARs) clustering and their associated scaffold proteins at inhibitory synaptic sites. Acts in concert with NLGN2 to recruit or stabilize GABAARs. The sequence is that of LHFPL tetraspan subfamily member 4 protein from Mus musculus (Mouse).